A 520-amino-acid polypeptide reads, in one-letter code: Erythritol kinase (520 aa).

The protein belongs to the FGGY kinase family.

It carries out the reaction erythritol + ATP = D-erythritol 1-phosphate + ADP + H(+). Its pathway is carbohydrate metabolism; erythritol degradation. Functionally, catalyzes the phosphorylation of erythritol to D-erythritol-1-phosphate. This chain is Erythritol kinase, found in Brucella abortus (strain 2308).